We begin with the raw amino-acid sequence, 214 residues long: Large ribosomal subunit protein uL16-like (214 aa).

Belongs to the universal ribosomal protein uL16 family. As to quaternary structure, component of the 60S large ribosomal subunit (LSU).

The protein resides in the cytoplasm. Functionally, testis-specific component of the ribosome, which is required for the transition from prophase to metaphase in male meiosis I. Compensates for the inactivated X-linked RPL10 paralog during spermatogenesis. The ribosome is a large ribonucleoprotein complex responsible for the synthesis of proteins in the cell. The small ribosomal subunit (SSU) binds messenger RNAs (mRNAs) and translates the encoded message by selecting cognate aminoacyl-transfer RNA (tRNA) molecules. The large subunit (LSU) contains the ribosomal catalytic site termed the peptidyl transferase center (PTC), which catalyzes the formation of peptide bonds, thereby polymerizing the amino acids delivered by tRNAs into a polypeptide chain. The nascent polypeptides leave the ribosome through a tunnel in the LSU and interact with protein factors that function in enzymatic processing, targeting, and the membrane insertion of nascent chains at the exit of the ribosomal tunnel. The protein is Large ribosomal subunit protein uL16-like (RPL10L) of Bos taurus (Bovine).